Consider the following 607-residue polypeptide: Aspartate--tRNA(Asp/Asn) ligase (607 aa).

Residue Glu168 coordinates L-aspartate. The aspartate stretch occupies residues 192–195 (QLFK). Arg214 contacts L-aspartate. Residues 214–216 (RDE) and Gln223 each bind ATP. His449 is a binding site for L-aspartate. Glu483 serves as a coordination point for ATP. Arg490 serves as a coordination point for L-aspartate. An ATP-binding site is contributed by 535 to 538 (GWDR). Residues 578–607 (LEAGVDARPKPEARAQAGTAGPAAPVADPT) form a disordered region. The segment covering 580-590 (AGVDARPKPEA) has biased composition (basic and acidic residues). The span at 591–607 (RAQAGTAGPAAPVADPT) shows a compositional bias: low complexity.

It belongs to the class-II aminoacyl-tRNA synthetase family. Type 1 subfamily. In terms of assembly, homodimer.

It is found in the cytoplasm. It carries out the reaction tRNA(Asx) + L-aspartate + ATP = L-aspartyl-tRNA(Asx) + AMP + diphosphate. In terms of biological role, aspartyl-tRNA synthetase with relaxed tRNA specificity since it is able to aspartylate not only its cognate tRNA(Asp) but also tRNA(Asn). Reaction proceeds in two steps: L-aspartate is first activated by ATP to form Asp-AMP and then transferred to the acceptor end of tRNA(Asp/Asn). The sequence is that of Aspartate--tRNA(Asp/Asn) ligase from Salinispora tropica (strain ATCC BAA-916 / DSM 44818 / JCM 13857 / NBRC 105044 / CNB-440).